The sequence spans 292 residues: MSELVRKLSGTAPNPAFPRGAVDTQMHMYLPGYPALPGGPGLPPGALPGPEDYRRLMQWLGIDRVIITQGNAHQRDNGNTLACVAEMGEAAHAVVIIDATTTEKDMEKLTAAGTVGARIMDLPGGAVNLSELDAVDERAHAADWMVAVQFDGNGLLDHLPRLQKIRSRWVFDHHGKFFKGIRTDGPEMAALLKLIDRGNLWFKFAGVYESSRKSWPYADVAAFSRVIAAHAPERIVWGTNWPHNSVRETAAYPDDARLAELTLGWLPDEAARHRALVENPEALFKLSPVKAT.

Belongs to the metallo-dependent hydrolases superfamily. The cofactor is Does not require a metal cofactor..

It carries out the reaction D-galactaro-1,5-lactone = D-galactaro-1,4-lactone. The protein operates within carbohydrate acid metabolism; D-galacturonate degradation via prokaryotic oxidative pathway. Catalyzes the isomerization of D-galactaro-1,5-lactone to D-galactaro-1,4-lactone. This is a step in the oxidative degradation pathway of D-galacturonate, which allows A.tumefaciens to utilize D-galacturonate as a sole carbon source. In Agrobacterium fabrum (strain C58 / ATCC 33970) (Agrobacterium tumefaciens (strain C58)), this protein is D-galactarolactone isomerase.